The chain runs to 328 residues: MNERKLNKDFLEIYEMSISGKIKKEDALEILKLDVYDLLHISYHLKKAFNKEKIETCSIINAKSGFCSENCNFCSQSIHNNSKINIYGLKSKEEILKSAKSIENYSNRFSIVSSGKKISEKEFEDILEIIDEIKNKTKLKVCVSLGLLNKSQLKALMKKNIRIHNNLETSKNYFKNICTTHEYEDKVDVIKNGKKLGLQICSGGIFGLGEDIIDRIDLLYELKELNVDSISLNLLNPIEGTKMREKINSKEIKSIEPIDALKSICISRIIMPERVIRLCGGREYVLKDLQSLSLLAVDGLMIGNYLTTSGRNIQSDLRMIEDMGFKKG.

One can recognise a Radical SAM core domain in the interval 49-273 (FNKEKIETCS…ICISRIIMPE (225 aa)). [4Fe-4S] cluster is bound by residues cysteine 67, cysteine 71, and cysteine 74. Residues serine 110, cysteine 142, cysteine 201, and arginine 277 each contribute to the [2Fe-2S] cluster site.

This sequence belongs to the radical SAM superfamily. Biotin synthase family. In terms of assembly, homodimer. [4Fe-4S] cluster is required as a cofactor. [2Fe-2S] cluster serves as cofactor.

The catalysed reaction is (4R,5S)-dethiobiotin + (sulfur carrier)-SH + 2 reduced [2Fe-2S]-[ferredoxin] + 2 S-adenosyl-L-methionine = (sulfur carrier)-H + biotin + 2 5'-deoxyadenosine + 2 L-methionine + 2 oxidized [2Fe-2S]-[ferredoxin]. The protein operates within cofactor biosynthesis; biotin biosynthesis; biotin from 7,8-diaminononanoate: step 2/2. Functionally, catalyzes the conversion of dethiobiotin (DTB) to biotin by the insertion of a sulfur atom into dethiobiotin via a radical-based mechanism. The protein is Biotin synthase of Methanococcus vannielii (strain ATCC 35089 / DSM 1224 / JCM 13029 / OCM 148 / SB).